The sequence spans 376 residues: Succinyl-diaminopimelate desuccinylase (376 aa).

His-67 provides a ligand contact to Zn(2+). Residue Asp-69 is part of the active site. Asp-100 lines the Zn(2+) pocket. Residue Glu-134 is the Proton acceptor of the active site. Residues Glu-135, Glu-163, and His-349 each contribute to the Zn(2+) site.

It belongs to the peptidase M20A family. DapE subfamily. Homodimer. Zn(2+) serves as cofactor. It depends on Co(2+) as a cofactor.

It carries out the reaction N-succinyl-(2S,6S)-2,6-diaminopimelate + H2O = (2S,6S)-2,6-diaminopimelate + succinate. It participates in amino-acid biosynthesis; L-lysine biosynthesis via DAP pathway; LL-2,6-diaminopimelate from (S)-tetrahydrodipicolinate (succinylase route): step 3/3. Functionally, catalyzes the hydrolysis of N-succinyl-L,L-diaminopimelic acid (SDAP), forming succinate and LL-2,6-diaminopimelate (DAP), an intermediate involved in the bacterial biosynthesis of lysine and meso-diaminopimelic acid, an essential component of bacterial cell walls. This is Succinyl-diaminopimelate desuccinylase from Nitrosomonas europaea (strain ATCC 19718 / CIP 103999 / KCTC 2705 / NBRC 14298).